Consider the following 488-residue polypeptide: UDP-N-acetylmuramoyl-L-alanyl-D-glutamate--2,6-diaminopimelate ligase (488 aa).

Residues Leu-24, Ser-26, and 41–43 contribute to the UDP-N-acetyl-alpha-D-muramoyl-L-alanyl-D-glutamate site; that span reads HQV. 113 to 119 contributes to the ATP binding site; the sequence is GTNGKTT. UDP-N-acetyl-alpha-D-muramoyl-L-alanyl-D-glutamate-binding positions include Asn-154, 155–156, Ser-182, Gln-188, and Arg-190; that span reads TT. Position 222 is an N6-carboxylysine (Lys-222). Meso-2,6-diaminopimelate-binding positions include Arg-386, 410 to 413, Gly-461, and Glu-465; that span reads DNPR. Positions 410–413 match the Meso-diaminopimelate recognition motif motif; sequence DNPR.

Belongs to the MurCDEF family. MurE subfamily. It depends on Mg(2+) as a cofactor. Carboxylation is probably crucial for Mg(2+) binding and, consequently, for the gamma-phosphate positioning of ATP.

Its subcellular location is the cytoplasm. It carries out the reaction UDP-N-acetyl-alpha-D-muramoyl-L-alanyl-D-glutamate + meso-2,6-diaminopimelate + ATP = UDP-N-acetyl-alpha-D-muramoyl-L-alanyl-gamma-D-glutamyl-meso-2,6-diaminopimelate + ADP + phosphate + H(+). It participates in cell wall biogenesis; peptidoglycan biosynthesis. Its function is as follows. Catalyzes the addition of meso-diaminopimelic acid to the nucleotide precursor UDP-N-acetylmuramoyl-L-alanyl-D-glutamate (UMAG) in the biosynthesis of bacterial cell-wall peptidoglycan. The protein is UDP-N-acetylmuramoyl-L-alanyl-D-glutamate--2,6-diaminopimelate ligase of Haemophilus influenzae (strain PittGG).